The chain runs to 80 residues: Omega-conotoxin-like 2/7 (80 aa).

A signal peptide spans 1-22 (MKLTCMMIVAVMFLTASIFITA). A propeptide spanning residues 23–51 (DNSRNGIENLPRMRRHEMKKPKASKLNKR) is cleaved from the precursor. Cystine bridges form between cysteine 53–cysteine 71, cysteine 60–cysteine 75, and cysteine 70–cysteine 79.

It belongs to the conotoxin O1 superfamily. In terms of tissue distribution, expressed by the venom duct.

Its subcellular location is the secreted. Its function is as follows. Omega-conotoxins act at presynaptic membranes, they bind and block voltage-gated calcium channels (Cav). This chain is Omega-conotoxin-like 2/7, found in Conus imperialis (Imperial cone).